We begin with the raw amino-acid sequence, 396 residues long: Elongation factor Tu (396 aa).

A tr-type G domain is found at 10 to 206; the sequence is KPHVNIGTIG…AVDESVPDPV (197 aa). A G1 region spans residues 19 to 26; that stretch reads GHVDHGKT. 19–26 lines the GTP pocket; that stretch reads GHVDHGKT. Thr-26 lines the Mg(2+) pocket. The G2 stretch occupies residues 62–66; the sequence is GITIN. Positions 83-86 are G3; that stretch reads DAPG. Residues 83 to 87 and 138 to 141 each bind GTP; these read DAPGH and NKAD. Residues 138–141 are G4; it reads NKAD. Positions 176 to 178 are G5; the sequence is SGL.

It belongs to the TRAFAC class translation factor GTPase superfamily. Classic translation factor GTPase family. EF-Tu/EF-1A subfamily. In terms of assembly, monomer.

It localises to the cytoplasm. The enzyme catalyses GTP + H2O = GDP + phosphate + H(+). Its function is as follows. GTP hydrolase that promotes the GTP-dependent binding of aminoacyl-tRNA to the A-site of ribosomes during protein biosynthesis. The protein is Elongation factor Tu of Arthrobacter sp. (strain FB24).